We begin with the raw amino-acid sequence, 382 residues long: Mannitol-1-phosphate 5-dehydrogenase (382 aa).

An NAD(+)-binding site is contributed by 3–14; sequence ALHFGAGNIGRG. N6-acetyllysine is present on Lys269.

Belongs to the mannitol dehydrogenase family.

The catalysed reaction is D-mannitol 1-phosphate + NAD(+) = beta-D-fructose 6-phosphate + NADH + H(+). This chain is Mannitol-1-phosphate 5-dehydrogenase, found in Escherichia coli (strain K12 / MC4100 / BW2952).